The chain runs to 379 residues: V-type proton ATPase subunit S1 (379 aa).

A signal peptide spans 1–17 (MLWKSLIALCVIGAAVA). Residues 18–333 (EQTPVFLWGA…WDCVGFVTPG (316 aa)) lie on the Lumenal side of the membrane. N-linked (GlcNAc...) asparagine glycans are attached at residues Asn225 and Asn284. A disulfide bond links Cys282 and Cys326. A helical membrane pass occupies residues 334–354 (ILMGLFVVALLLVIMFVGVCW). Over 355 to 379 (MMDINTMDRFDDPKGKTITINAAAE) the chain is Cytoplasmic.

Belongs to the vacuolar ATPase subunit S1 family. As to quaternary structure, accessory component of the multisubunit proton-transporting vacuolar (V)-ATPase protein pump. May interact with ATP6AP2.

It is found in the endoplasmic reticulum membrane. Accessory subunit of the proton-transporting vacuolar (V)-ATPase protein pump, which is required for luminal acidification of secretory vesicles. The protein is V-type proton ATPase subunit S1 of Drosophila melanogaster (Fruit fly).